The chain runs to 746 residues: NAD(P)H-quinone oxidoreductase subunit 5, chloroplastic (746 aa).

The next 16 membrane-spanning stretches (helical) occupy residues W9–F29, W40–I60, I89–I109, F125–I145, V147–T167, G185–F205, V221–S241, T258–A278, L280–I300, L327–I347, A354–S374, T396–S416, F425–Y445, I547–P567, F608–Y628, and Y723–F743.

It belongs to the complex I subunit 5 family. NDH is composed of at least 16 different subunits, 5 of which are encoded in the nucleus.

The protein resides in the plastid. Its subcellular location is the chloroplast thylakoid membrane. The enzyme catalyses a plastoquinone + NADH + (n+1) H(+)(in) = a plastoquinol + NAD(+) + n H(+)(out). It carries out the reaction a plastoquinone + NADPH + (n+1) H(+)(in) = a plastoquinol + NADP(+) + n H(+)(out). Functionally, NDH shuttles electrons from NAD(P)H:plastoquinone, via FMN and iron-sulfur (Fe-S) centers, to quinones in the photosynthetic chain and possibly in a chloroplast respiratory chain. The immediate electron acceptor for the enzyme in this species is believed to be plastoquinone. Couples the redox reaction to proton translocation, and thus conserves the redox energy in a proton gradient. The polypeptide is NAD(P)H-quinone oxidoreductase subunit 5, chloroplastic (ndhF) (Lobularia maritima (Sweet alyssum)).